The chain runs to 192 residues: NADH-quinone oxidoreductase subunit B 1 (192 aa).

Cys71, Cys72, Cys136, and Cys166 together coordinate [4Fe-4S] cluster.

It belongs to the complex I 20 kDa subunit family. NDH-1 is composed of 14 different subunits. Subunits NuoB, C, D, E, F, and G constitute the peripheral sector of the complex. [4Fe-4S] cluster is required as a cofactor.

The protein resides in the cell inner membrane. It carries out the reaction a quinone + NADH + 5 H(+)(in) = a quinol + NAD(+) + 4 H(+)(out). Functionally, NDH-1 shuttles electrons from NADH, via FMN and iron-sulfur (Fe-S) centers, to quinones in the respiratory chain. The immediate electron acceptor for the enzyme in this species is believed to be ubiquinone. Couples the redox reaction to proton translocation (for every two electrons transferred, four hydrogen ions are translocated across the cytoplasmic membrane), and thus conserves the redox energy in a proton gradient. The protein is NADH-quinone oxidoreductase subunit B 1 of Rhizobium meliloti (strain 1021) (Ensifer meliloti).